The chain runs to 471 residues: ATP synthase subunit beta (471 aa).

ATP is bound at residue 153–160; sequence GGAGVGKT.

The protein belongs to the ATPase alpha/beta chains family. As to quaternary structure, F-type ATPases have 2 components, CF(1) - the catalytic core - and CF(0) - the membrane proton channel. CF(1) has five subunits: alpha(3), beta(3), gamma(1), delta(1), epsilon(1). CF(0) has four main subunits: a(1), b(1), b'(1) and c(9-12).

The protein resides in the cell membrane. The enzyme catalyses ATP + H2O + 4 H(+)(in) = ADP + phosphate + 5 H(+)(out). Its function is as follows. Produces ATP from ADP in the presence of a proton gradient across the membrane. The catalytic sites are hosted primarily by the beta subunits. This is ATP synthase subunit beta from Chloroflexus aurantiacus (strain ATCC 29364 / DSM 637 / Y-400-fl).